A 175-amino-acid polypeptide reads, in one-letter code: Adenine phosphoribosyltransferase (175 aa).

The protein belongs to the purine/pyrimidine phosphoribosyltransferase family. As to quaternary structure, homodimer.

The protein resides in the cytoplasm. It carries out the reaction AMP + diphosphate = 5-phospho-alpha-D-ribose 1-diphosphate + adenine. The protein operates within purine metabolism; AMP biosynthesis via salvage pathway; AMP from adenine: step 1/1. Functionally, catalyzes a salvage reaction resulting in the formation of AMP, that is energically less costly than de novo synthesis. This chain is Adenine phosphoribosyltransferase, found in Oenococcus oeni (strain ATCC BAA-331 / PSU-1).